A 364-amino-acid chain; its full sequence is tRNA/tmRNA (uracil-C(5))-methyltransferase (364 aa).

S-adenosyl-L-methionine contacts are provided by Gln186, Tyr214, Asn219, Glu235, and Asp295. The active-site Nucleophile is the Cys320. The Proton acceptor role is filled by Glu354.

Belongs to the class I-like SAM-binding methyltransferase superfamily. RNA M5U methyltransferase family. TrmA subfamily.

It carries out the reaction uridine(54) in tRNA + S-adenosyl-L-methionine = 5-methyluridine(54) in tRNA + S-adenosyl-L-homocysteine + H(+). The catalysed reaction is uridine(341) in tmRNA + S-adenosyl-L-methionine = 5-methyluridine(341) in tmRNA + S-adenosyl-L-homocysteine + H(+). Dual-specificity methyltransferase that catalyzes the formation of 5-methyluridine at position 54 (m5U54) in all tRNAs, and that of position 341 (m5U341) in tmRNA (transfer-mRNA). This is tRNA/tmRNA (uracil-C(5))-methyltransferase from Azoarcus sp. (strain BH72).